The primary structure comprises 97 residues: Putative septation protein SpoVG (97 aa).

This sequence belongs to the SpoVG family.

Its function is as follows. Essential for sporulation. Interferes with or is a negative regulator of the pathway leading to asymmetric septation. In Bacillus licheniformis (strain ATCC 14580 / DSM 13 / JCM 2505 / CCUG 7422 / NBRC 12200 / NCIMB 9375 / NCTC 10341 / NRRL NRS-1264 / Gibson 46), this protein is Putative septation protein SpoVG.